We begin with the raw amino-acid sequence, 234 residues long: CKLF-like MARVEL transmembrane domain-containing protein 4 (234 aa).

Acidic residues predominate over residues 1 to 11 (MRSGEELDGFE). Residues 1 to 38 (MRSGEELDGFEGEASSTSMISGASSPYQPTTEPVSQRR) are disordered. Over residues 15-25 (SSTSMISGASS) the composition is skewed to low complexity. The MARVEL domain maps to 49–176 (YLRGALGRLK…NTFLAVQKWR (128 aa)). The next 4 helical transmembrane spans lie at 59 to 79 (VAQV…MACS), 85 to 105 (YFFE…LIMF), 123 to 143 (LVNT…LAAL), and 151 to 171 (IAAV…TFLA). Residue Ser194 is modified to Phosphoserine.

It belongs to the chemokine-like factor family. Interacts with PD-L1/CD274 and CMTM6. Highly expressed in testis and prostate.

Its subcellular location is the membrane. Acts as a backup for CMTM6 to regulate plasma membrane expression of PD-L1/CD274, an immune inhibitory ligand critical for immune tolerance to self and antitumor immunity. May protect PD-L1/CD274 from being polyubiquitinated and targeted for degradation. This chain is CKLF-like MARVEL transmembrane domain-containing protein 4, found in Homo sapiens (Human).